The following is a 223-amino-acid chain: MTIAKMIDHTALKPDTTKEQILALTKEAREYGFASVCVNPTWVKLSAEQLAGAESVVCTVIGFPLGANTPEVKAFEVKDAIQNGAKEVDMVINIGALKDKDDELVERDIRAVVDAAKGKALVKVIIETCLLTDEEKVRACEIAVKAGTDFVKTSTGFSTGGATAEDIALMRKTVGPNIGVKASGGVRTKEDVEKMIEAGATRIGASAGVAIVSGEKPAKPDNY.

Catalysis depends on Asp-89, which acts as the Proton donor/acceptor. Catalysis depends on Lys-152, which acts as the Schiff-base intermediate with acetaldehyde. Lys-181 acts as the Proton donor/acceptor in catalysis.

Belongs to the DeoC/FbaB aldolase family. DeoC type 1 subfamily.

Its subcellular location is the cytoplasm. The enzyme catalyses 2-deoxy-D-ribose 5-phosphate = D-glyceraldehyde 3-phosphate + acetaldehyde. It functions in the pathway carbohydrate degradation; 2-deoxy-D-ribose 1-phosphate degradation; D-glyceraldehyde 3-phosphate and acetaldehyde from 2-deoxy-alpha-D-ribose 1-phosphate: step 2/2. Its function is as follows. Catalyzes a reversible aldol reaction between acetaldehyde and D-glyceraldehyde 3-phosphate to generate 2-deoxy-D-ribose 5-phosphate. This chain is Deoxyribose-phosphate aldolase, found in Listeria monocytogenes serotype 4a (strain HCC23).